The sequence spans 464 residues: Opioid growth factor receptor-like protein 1 (464 aa).

Disordered regions lie at residues 1–91 (MGNL…AKPK) and 309–464 (ENFI…TSSG). A compositionally biased stretch (basic and acidic residues) spans 43–59 (QQHDEPEQPKQPPERAG). The span at 74–86 (AAGAEQGGESTEG) shows a compositional bias: low complexity. A compositionally biased stretch (basic and acidic residues) spans 316 to 325 (PKKELPERSK). Polar residues predominate over residues 327–342 (QKTPTLPASGSNGQTS). Composition is skewed to basic and acidic residues over residues 363–382 (SVEE…DKPS), 390–400 (PKPRNTEKDSA), and 425–439 (SEKD…KDSE). Residues 452 to 464 (AQQNATNPQTSSG) show a composition bias toward polar residues.

This sequence belongs to the opioid growth factor receptor family.

The polypeptide is Opioid growth factor receptor-like protein 1 (Ogfrl1) (Mus musculus (Mouse)).